Here is a 548-residue protein sequence, read N- to C-terminus: MSGDTGTPNQGGTRYGSISSPPSPGPQQAPPGGTYLSEKIPIPDTESGAFSLRKLWAFTGPGFLMSIAFLDPGNIESDLQAGAVAGFKLLWVLLWATVLGLLCQRLAARLGVVTGKDLGEVCHLYYPKVPRTLLWLTIELAIVGSDMQEVIGTAIAFSLLSAGRIPLWGGVLITIVDTFFFLFLDNYGLRKLEAFFGFLITIMALTFGYEYVVARPAQGALLQGLFLPSCPGCGQPELLQAVGIVGAIIMPHNIYLHSSLVKSREVDRSRRADIREANMYFLIEATIALSVSFFINLFVMAVFGQAFYKQTNQAAFNICANSSLHDYATIFPRDNLTVAVDIYQGGVILGCLFGPAALYIWAVGLLAAGQSSTMTGTYAGQFVMEGFLKLRWSRFARVLLTRSCAIPPTVLLAVFRDLQDLSGLNDLLNVLQSLLLPFAVLPILTFTSMPALMQEFANGLVSKIITSSIMVLVCAVNLYFVISYVPSLPHPAYFSLVALLAAAYLGLTTYLVWTCLITQGATRLAHSSHQRFLYGLPGEDQEEGRTSG.

Polar residues predominate over residues 1 to 12 (MSGDTGTPNQGG). Positions 1–38 (MSGDTGTPNQGGTRYGSISSPPSPGPQQAPPGGTYLSE) are disordered. Topologically, residues 1–55 (MSGDTGTPNQGGTRYGSISSPPSPGPQQAPPGGTYLSEKIPIPDTESGAFSLRKL) are cytoplasmic. A helical transmembrane segment spans residues 56–73 (WAFTGPGFLMSIAFLDPG). The Extracellular segment spans residues 74–82 (NIESDLQAG). Residues 83–102 (AVAGFKLLWVLLWATVLGLL) form a helical membrane-spanning segment. Over 103–139 (CQRLAARLGVVTGKDLGEVCHLYYPKVPRTLLWLTIE) the chain is Cytoplasmic. A helical transmembrane segment spans residues 140 to 160 (LAIVGSDMQEVIGTAIAFSLL). At 161–164 (SAGR) the chain is on the extracellular side. Residues 165–184 (IPLWGGVLITIVDTFFFLFL) form a helical membrane-spanning segment. Residues 185-193 (DNYGLRKLE) lie on the Cytoplasmic side of the membrane. Residues 194 to 214 (AFFGFLITIMALTFGYEYVVA) traverse the membrane as a helical segment. At 215-237 (RPAQGALLQGLFLPSCPGCGQPE) the chain is on the extracellular side. A helical membrane pass occupies residues 238–256 (LLQAVGIVGAIIMPHNIYL). The Cytoplasmic portion of the chain corresponds to 257–284 (HSSLVKSREVDRSRRADIREANMYFLIE). Residues 285–304 (ATIALSVSFFINLFVMAVFG) traverse the membrane as a helical segment. The Extracellular segment spans residues 305–346 (QAFYKQTNQAAFNICANSSLHDYATIFPRDNLTVAVDIYQGG). N321 and N335 each carry an N-linked (GlcNAc...) asparagine glycan. A helical membrane pass occupies residues 347 to 366 (VILGCLFGPAALYIWAVGLL). Residues 367 to 397 (AAGQSSTMTGTYAGQFVMEGFLKLRWSRFAR) are Cytoplasmic-facing. The helical transmembrane segment at 398 to 415 (VLLTRSCAIPPTVLLAVF) threads the bilayer. Residues 416-426 (RDLQDLSGLND) are Extracellular-facing. A helical membrane pass occupies residues 427–447 (LLNVLQSLLLPFAVLPILTFT). The Cytoplasmic segment spans residues 448–463 (SMPALMQEFANGLVSK). A helical transmembrane segment spans residues 464–485 (IITSSIMVLVCAVNLYFVISYV). The Extracellular segment spans residues 486 to 493 (PSLPHPAY). The helical transmembrane segment at 494-513 (FSLVALLAAAYLGLTTYLVW) threads the bilayer. Residues 514 to 548 (TCLITQGATRLAHSSHQRFLYGLPGEDQEEGRTSG) are Cytoplasmic-facing.

The protein belongs to the NRAMP family.

The protein localises to the late endosome membrane. It localises to the lysosome membrane. It carries out the reaction Zn(2+)(in) + H(+)(out) = Zn(2+)(out) + H(+)(in). The enzyme catalyses Fe(2+)(in) + H(+)(out) = Fe(2+)(out) + H(+)(in). It catalyses the reaction Mn(2+)(in) + H(+)(out) = Mn(2+)(out) + H(+)(in). Macrophage-specific antiporter that fluxes metal ions in either direction against a proton gradient. Localized to late endosomal lysosomal membranes, delivers bivalent cations from the cytosol into these acidic compartments where they may directly affect antimicrobial activity. Involved in iron metabolism and host natural resistance to infection with intracellular parasites. Pathogen resistance involves sequestration of Fe(2+) and Mn(2+), cofactors of both prokaryotic and eukaryotic catalases and superoxide dismutases, not only to protect the macrophage against its own generation of reactive oxygen species, but to deny the cations to the pathogen for synthesis of its protective enzymes. This chain is Natural resistance-associated macrophage protein 1 (SLC11A1), found in Ovis aries (Sheep).